The following is a 611-amino-acid chain: Dihydroxy-acid dehydratase (611 aa).

Residue aspartate 81 coordinates Mg(2+). Residue cysteine 122 participates in [2Fe-2S] cluster binding. Residues aspartate 123 and lysine 124 each coordinate Mg(2+). Lysine 124 bears the N6-carboxylysine mark. Residue cysteine 195 participates in [2Fe-2S] cluster binding. Mg(2+) is bound at residue glutamate 491. The active-site Proton acceptor is serine 517.

It belongs to the IlvD/Edd family. In terms of assembly, homodimer. It depends on [2Fe-2S] cluster as a cofactor. The cofactor is Mg(2+).

The catalysed reaction is (2R)-2,3-dihydroxy-3-methylbutanoate = 3-methyl-2-oxobutanoate + H2O. It carries out the reaction (2R,3R)-2,3-dihydroxy-3-methylpentanoate = (S)-3-methyl-2-oxopentanoate + H2O. It participates in amino-acid biosynthesis; L-isoleucine biosynthesis; L-isoleucine from 2-oxobutanoate: step 3/4. Its pathway is amino-acid biosynthesis; L-valine biosynthesis; L-valine from pyruvate: step 3/4. In terms of biological role, functions in the biosynthesis of branched-chain amino acids. Catalyzes the dehydration of (2R,3R)-2,3-dihydroxy-3-methylpentanoate (2,3-dihydroxy-3-methylvalerate) into 2-oxo-3-methylpentanoate (2-oxo-3-methylvalerate) and of (2R)-2,3-dihydroxy-3-methylbutanoate (2,3-dihydroxyisovalerate) into 2-oxo-3-methylbutanoate (2-oxoisovalerate), the penultimate precursor to L-isoleucine and L-valine, respectively. This Actinobacillus pleuropneumoniae serotype 3 (strain JL03) protein is Dihydroxy-acid dehydratase.